A 182-amino-acid polypeptide reads, in one-letter code: Large ribosomal subunit protein uL5 (182 aa).

This sequence belongs to the universal ribosomal protein uL5 family. As to quaternary structure, part of the 50S ribosomal subunit; part of the 5S rRNA/L5/L18/L25 subcomplex. Contacts the 5S rRNA and the P site tRNA. Forms a bridge to the 30S subunit in the 70S ribosome.

This is one of the proteins that bind and probably mediate the attachment of the 5S RNA into the large ribosomal subunit, where it forms part of the central protuberance. In the 70S ribosome it contacts protein S13 of the 30S subunit (bridge B1b), connecting the 2 subunits; this bridge is implicated in subunit movement. Contacts the P site tRNA; the 5S rRNA and some of its associated proteins might help stabilize positioning of ribosome-bound tRNAs. The polypeptide is Large ribosomal subunit protein uL5 (Borreliella afzelii (strain PKo) (Borrelia afzelii)).